The chain runs to 238 residues: Ubiquinone biosynthesis O-methyltransferase (238 aa).

Residues R39, G58, D79, and M123 each contribute to the S-adenosyl-L-methionine site.

It belongs to the methyltransferase superfamily. UbiG/COQ3 family.

It catalyses the reaction a 3-demethylubiquinol + S-adenosyl-L-methionine = a ubiquinol + S-adenosyl-L-homocysteine + H(+). The enzyme catalyses a 3-(all-trans-polyprenyl)benzene-1,2-diol + S-adenosyl-L-methionine = a 2-methoxy-6-(all-trans-polyprenyl)phenol + S-adenosyl-L-homocysteine + H(+). It participates in cofactor biosynthesis; ubiquinone biosynthesis. Functionally, O-methyltransferase that catalyzes the 2 O-methylation steps in the ubiquinone biosynthetic pathway. This is Ubiquinone biosynthesis O-methyltransferase from Hahella chejuensis (strain KCTC 2396).